The primary structure comprises 737 residues: Amyloid-beta A4 protein (737 aa).

An N-terminal signal peptide occupies residues 1–18 (MGETTAFVLLLVATLTRS). The Extracellular segment spans residues 19–668 (SEIPADDTVG…ADDVGSNKGA (650 aa)). The GFLD subdomain stretch occupies residues 29-124 (LLTEPQVAMF…PYRCLVGEFV (96 aa)). The E1 domain maps to 29 to 190 (LLTEPQVAMF…RGVKFVCCPA (162 aa)). Cystine bridges form between Cys39/Cys63, Cys74/Cys118, Cys99/Cys106, Cys134/Cys188, Cys145/Cys175, and Cys159/Cys187. Residues 132-190 (DKCKFLHQERMNQCESHLHWHTVAKESCGDRSMNLHDYGMLLPCGIDRFRGVKFVCCPA) are cuBD subdomain. The Cu cation site is built by His148, His152, and Tyr169. Composition is skewed to acidic residues over residues 193–207 (EQET…EESD) and 242–262 (GDGD…EQES). Positions 193–280 (EQETDSSEVE…MTTTTTTTTE (88 aa)) are disordered. One can recognise a BPTI/Kunitz inhibitor domain in the interval 286 to 344 (VRAVCWAQAESGPCRAMLERWYFNPKKRRCVPFLFGGCGGNRNNFESEEYCLAVCSSSL). Intrachain disulfides connect Cys290–Cys340, Cys299–Cys323, and Cys315–Cys336. In terms of domain architecture, E2 spans 354–545 (AVDQYFEAPG…SEIQNQIYPA (192 aa)). Asn522 is a glycosylation site (N-linked (GlcNAc...) asparagine). The helical transmembrane segment at 669–689 (IIGLMVGGVVIATVIVITLVM) threads the bilayer. At 690–737 (LRKKQYTSIHHGVIEVDAAVTPEERHLARMQQNGYENPTYKFFEQMQN) the chain is on the cytoplasmic side. Residues 724-729 (YENPTY) carry the YENPXY motif motif. Residues 726–729 (NPTY) are clathrin-binding.

Belongs to the APP family.

It is found in the membrane. Functional neuronal receptor which couples to intracellular signaling pathway through the GTP-binding protein G(O). In Takifugu rubripes (Japanese pufferfish), this protein is Amyloid-beta A4 protein (app).